Consider the following 397-residue polypeptide: Elongation factor Tu (397 aa).

The tr-type G domain occupies Lys-10–Lys-207. A G1 region spans residues Gly-19–Thr-26. Residue Gly-19 to Thr-26 coordinates GTP. A Mg(2+)-binding site is contributed by Thr-26. The G2 stretch occupies residues Gly-60 to Asn-64. A G3 region spans residues Asp-81 to Gly-84. Residues Asp-81 to His-85 and Asn-136 to Asp-139 contribute to the GTP site. The segment at Asn-136 to Asp-139 is G4. The segment at Ser-177–Leu-179 is G5.

This sequence belongs to the TRAFAC class translation factor GTPase superfamily. Classic translation factor GTPase family. EF-Tu/EF-1A subfamily. Monomer.

It localises to the cytoplasm. The enzyme catalyses GTP + H2O = GDP + phosphate + H(+). Its function is as follows. GTP hydrolase that promotes the GTP-dependent binding of aminoacyl-tRNA to the A-site of ribosomes during protein biosynthesis. This Metamycoplasma hominis (strain ATCC 23114 / DSM 25592 / NBRC 14850 / NCTC 10111 / PG21) (Mycoplasma hominis) protein is Elongation factor Tu.